The sequence spans 213 residues: ATP-dependent dethiobiotin synthetase BioD (213 aa).

13–18 is a binding site for ATP; it reads GIGKTV. A Mg(2+)-binding site is contributed by Thr17. The active site involves Lys33. Glu100 lines the Mg(2+) pocket. ATP-binding positions include 100-103 and 184-186; these read EGAG and PHL.

This sequence belongs to the dethiobiotin synthetase family. As to quaternary structure, homodimer. It depends on Mg(2+) as a cofactor.

It localises to the cytoplasm. It catalyses the reaction (7R,8S)-7,8-diammoniononanoate + CO2 + ATP = (4R,5S)-dethiobiotin + ADP + phosphate + 3 H(+). The protein operates within cofactor biosynthesis; biotin biosynthesis; biotin from 7,8-diaminononanoate: step 1/2. Its function is as follows. Catalyzes a mechanistically unusual reaction, the ATP-dependent insertion of CO2 between the N7 and N8 nitrogen atoms of 7,8-diaminopelargonic acid (DAPA, also called 7,8-diammoniononanoate) to form a ureido ring. This Rhodopseudomonas palustris (strain BisA53) protein is ATP-dependent dethiobiotin synthetase BioD.